We begin with the raw amino-acid sequence, 717 residues long: Epithelial splicing regulatory protein 2 (717 aa).

Over residues 1-14 (MTPPPPPPPPPGPD) the composition is skewed to pro residues. Residues 1-23 (MTPPPPPPPPPGPDPAVDSATDP) are disordered. The residue at position 83 (serine 83) is a Phosphoserine. RRM domains follow at residues 247–343 (TVVR…RFLS), 348–428 (VILR…RSTA), and 465–545 (DCVR…PCST). Residue serine 563 is modified to Phosphoserine.

This sequence belongs to the ESRP family. In terms of assembly, interacts with RBPMS. In terms of tissue distribution, epithelial cell-specific.

The protein localises to the nucleus. Its function is as follows. mRNA splicing factor that regulates the formation of epithelial cell-specific isoforms. Specifically regulates the expression of FGFR2-IIIb, an epithelial cell-specific isoform of FGFR2. Also regulates the splicing of CD44, CTNND1, ENAH, 3 transcripts that undergo changes in splicing during the epithelial-to-mesenchymal transition (EMT). Acts by directly binding specific sequences in mRNAs. Binds the GU-rich sequence motifs in the ISE/ISS-3, a cis-element regulatory region present in the mRNA of FGFR2. The protein is Epithelial splicing regulatory protein 2 (Esrp2) of Mus musculus (Mouse).